The chain runs to 583 residues: 2-succinyl-5-enolpyruvyl-6-hydroxy-3-cyclohexene-1-carboxylate synthase (583 aa).

Belongs to the TPP enzyme family. MenD subfamily. In terms of assembly, homodimer. Requires Mg(2+) as cofactor. Mn(2+) serves as cofactor. It depends on thiamine diphosphate as a cofactor.

It catalyses the reaction isochorismate + 2-oxoglutarate + H(+) = 5-enolpyruvoyl-6-hydroxy-2-succinyl-cyclohex-3-ene-1-carboxylate + CO2. The protein operates within quinol/quinone metabolism; 1,4-dihydroxy-2-naphthoate biosynthesis; 1,4-dihydroxy-2-naphthoate from chorismate: step 2/7. Its pathway is quinol/quinone metabolism; menaquinone biosynthesis. Functionally, catalyzes the thiamine diphosphate-dependent decarboxylation of 2-oxoglutarate and the subsequent addition of the resulting succinic semialdehyde-thiamine pyrophosphate anion to isochorismate to yield 2-succinyl-5-enolpyruvyl-6-hydroxy-3-cyclohexene-1-carboxylate (SEPHCHC). The sequence is that of 2-succinyl-5-enolpyruvyl-6-hydroxy-3-cyclohexene-1-carboxylate synthase from Chlorobium limicola (strain DSM 245 / NBRC 103803 / 6330).